The chain runs to 293 residues: Homoserine kinase (293 aa).

84–94 (PFSRGLGSSSS) contacts ATP.

This sequence belongs to the GHMP kinase family. Homoserine kinase subfamily.

The protein localises to the cytoplasm. It carries out the reaction L-homoserine + ATP = O-phospho-L-homoserine + ADP + H(+). Its pathway is amino-acid biosynthesis; L-threonine biosynthesis; L-threonine from L-aspartate: step 4/5. Its function is as follows. Catalyzes the ATP-dependent phosphorylation of L-homoserine to L-homoserine phosphate. The chain is Homoserine kinase from Campylobacter fetus subsp. fetus (strain 82-40).